The following is a 392-amino-acid chain: tRNA-specific 2-thiouridylase MnmA (392 aa).

ATP is bound by residues alanine 18–serine 25 and leucine 44. Residue cysteine 112 is the Nucleophile of the active site. A disulfide bridge connects residues cysteine 112 and cysteine 208. Position 136 (glycine 136) interacts with ATP. An interaction with tRNA region spans residues arginine 158–glutamine 160. Cysteine 208 (cysteine persulfide intermediate) is an active-site residue.

Belongs to the MnmA/TRMU family.

The protein localises to the cytoplasm. It catalyses the reaction S-sulfanyl-L-cysteinyl-[protein] + uridine(34) in tRNA + AH2 + ATP = 2-thiouridine(34) in tRNA + L-cysteinyl-[protein] + A + AMP + diphosphate + H(+). Its function is as follows. Catalyzes the 2-thiolation of uridine at the wobble position (U34) of tRNA, leading to the formation of s(2)U34. The chain is tRNA-specific 2-thiouridylase MnmA from Rhodospirillum centenum (strain ATCC 51521 / SW).